Consider the following 648-residue polypeptide: MGLPRLVCAFLFAACCCCRSATGVPGEEKQPTPTPDPVEVEVGNTALLKCGPAHPSGNFSQVEWFLIHKERQIPIFRVHQGKGQSEPGEYEHRLSLHGPGATLALSQVTPHDDRMFLCKSKQPRPQDHYVQLQVYKAPEEPTIQANVLGIHVDIQELKEVATCVGRNGYPIPQVIWYKNGRPLQEEENRVHIQSSQTVESSGLYTLKSVLSARLVKEDKDAQFYCELSYRLPSGNRMKESKEVTVPVLYPAEKVWVEVEPVGLLKEGDHVKIRCLTDGNPQPHFTINKKNPSTEEMEEESTDENGLLSLEPAQKHHSGVYQCQSLDLETTVMLSSDPLELLVNYVSDVQVDPTAPEVQEGDSLTLTCKAESNQDLEFEWLRDKTGQLLGKGPILQLNNVKREAGGRYLCVASVPSVPGLNRTRRVSVGIFGSPWMAAKERKVWAQENAMLNLSCEASGHPQPTISWNINGSATEWNPDPQTVVSTLNVLVTPELLETGAECTASNSLGSNTTVIILKLVTLTTLTPDSSQTTGLSTPTVSPHSRANSTSTEKKLPQQESKGVVIVAVIVCTLVLAVLGATLYYFYKKGKLPCGRSGKQEITLPPTRKSEFVVEVKSDKLPEEMALLQGSNGDKRAPGDQGEKYIDLRH.

The first 23 residues, 1 to 23, serve as a signal peptide directing secretion; sequence MGLPRLVCAFLFAACCCCRSATG. 2 Ig-like V-type domains span residues 24 to 131 and 141 to 244; these read VPGE…HYVQ and PTIQ…KEVT. The Extracellular segment spans residues 24-560; the sequence is VPGEEKQPTP…EKKLPQQESK (537 aa). Intrachain disulfides connect Cys-50/Cys-118, Cys-163/Cys-225, Cys-274/Cys-322, Cys-367/Cys-409, and Cys-454/Cys-501. Asn-58 is a glycosylation site (N-linked (GlcNAc...) asparagine). Ig-like C2-type domains follow at residues 246 to 332, 337 to 426, and 432 to 512; these read PVLY…TTVM, PLEL…RRVS, and SPWM…SNTT. Positions 282 to 304 are disordered; the sequence is PHFTINKKNPSTEEMEEESTDEN. The N-linked (GlcNAc...) asparagine glycan is linked to Asn-510. Positions 527 to 549 are enriched in polar residues; sequence DSSQTTGLSTPTVSPHSRANSTS. The tract at residues 527-554 is disordered; that stretch reads DSSQTTGLSTPTVSPHSRANSTSTEKKL. The helical transmembrane segment at 561–581 threads the bilayer; sequence GVVIVAVIVCTLVLAVLGATL. The Cytoplasmic segment spans residues 582-648; that stretch reads YYFYKKGKLP…QGEKYIDLRH (67 aa). Phosphoserine is present on residues Ser-608 and Ser-616. Residues 626-648 are disordered; it reads LQGSNGDKRAPGDQGEKYIDLRH. Residues 631–648 show a composition bias toward basic and acidic residues; sequence GDKRAPGDQGEKYIDLRH.

As to expression, detected in lung, uterus and placenta (at protein level). Detected in heart, lung, kidney, adrenal gland, intestine, testis, skeletal muscle and aorta. Detected at low levels in adult brain, in particular in brain stem and spinal cord, but also in hippocampus, olfactory bulb and striatum (at protein level).

Its subcellular location is the cell membrane. The protein localises to the perikaryon. Functionally, plays a role in cell adhesion, and in cohesion of the endothelial monolayer at intercellular junctions in vascular tissue. Its expression may allow melanoma cells to interact with cellular elements of the vascular system, thereby enhancing hematogeneous tumor spread. Could be an adhesion molecule active in neural crest cells during embryonic development. Acts as a surface receptor that triggers tyrosine phosphorylation of FYN and PTK2/FAK1, and a transient increase in the intracellular calcium concentration. The chain is Cell surface glycoprotein MUC18 (Mcam) from Rattus norvegicus (Rat).